A 1004-amino-acid chain; its full sequence is Zinc finger protein 316 (1004 aa).

A disordered region spans residues M1–D148. The residue at position 2 (A2) is an N-acetylalanine. A Phosphothreonine modification is found at T7. S10 is subject to Phosphoserine. Residues G21 to V60 are compositionally biased toward acidic residues. Positions A61 to V72 are enriched in low complexity. Acidic residues predominate over residues A73–C95. At S112 the chain carries Phosphoserine. The segment covering E132–D148 has biased composition (acidic residues). The 72-residue stretch at V158–I229 folds into the KRAB domain. C2H2-type zinc fingers lie at residues T345–H367, F373–H395, F401–H423, Y429–H451, and Y457–H479. A C2H2-type 6; degenerate zinc finger spans residues H485 to A512. Residues G508–P574 form a disordered region. Over residues E531 to E557 the composition is skewed to acidic residues. 5 C2H2-type zinc fingers span residues W691–H713, H719–H741, F747–H769, F775–H797, and Y803–H825. K829 participates in a covalent cross-link: Glycyl lysine isopeptide (Lys-Gly) (interchain with G-Cter in SUMO2). C2H2-type zinc fingers lie at residues H831–H853, F859–H881, F887–H909, and Y915–H937. The disordered stretch occupies residues T936 to L976. The span at G939 to P968 shows a compositional bias: low complexity. A Glycyl lysine isopeptide (Lys-Gly) (interchain with G-Cter in SUMO2) cross-link involves residue K955.

Belongs to the krueppel C2H2-type zinc-finger protein family.

It is found in the nucleus. Functionally, may be involved in transcriptional regulation. In Homo sapiens (Human), this protein is Zinc finger protein 316 (ZNF316).